Here is a 386-residue protein sequence, read N- to C-terminus: Cytochrome b (386 aa).

4 consecutive transmembrane segments (helical) span residues 39–59, 83–104, 119–139, and 184–204; these read FGSL…FLAM, FMLK…YIHM, WNIG…GYVL, and FFSL…LHIL. Heme b contacts are provided by His89 and His103. Residues His188 and His202 each contribute to the heme b site. His207 lines the a ubiquinone pocket. Helical transmembrane passes span 232 to 252, 294 to 314, 326 to 346, and 353 to 374; these read YKDL…CYFM, LGGV…PFIH, LGKI…WLGA, and YIMI…LVPL.

Belongs to the cytochrome b family. As to quaternary structure, the main subunits of complex b-c1 are: cytochrome b, cytochrome c1 and the Rieske protein. It depends on heme b as a cofactor.

The protein localises to the mitochondrion inner membrane. Its function is as follows. Component of the ubiquinol-cytochrome c reductase complex (complex III or cytochrome b-c1 complex) that is part of the mitochondrial respiratory chain. The b-c1 complex mediates electron transfer from ubiquinol to cytochrome c. Contributes to the generation of a proton gradient across the mitochondrial membrane that is then used for ATP synthesis. The chain is Cytochrome b (MT-CYB) from Sarcophyton glaucum (Toadstool umbrella leather coral).